A 518-amino-acid chain; its full sequence is Protein nucleotidyltransferase YdiU (518 aa).

The segment at 1-22 (MTHLQFDNRLRAELPGDPEEGP) is disordered. Positions 100, 102, 103, 123, 135, 136, 193, and 200 each coordinate ATP. D270 acts as the Proton acceptor in catalysis. The Mg(2+) site is built by N271 and D280. D280 contributes to the ATP binding site.

This sequence belongs to the SELO family. It depends on Mg(2+) as a cofactor. Mn(2+) is required as a cofactor.

It carries out the reaction L-seryl-[protein] + ATP = 3-O-(5'-adenylyl)-L-seryl-[protein] + diphosphate. It catalyses the reaction L-threonyl-[protein] + ATP = 3-O-(5'-adenylyl)-L-threonyl-[protein] + diphosphate. The catalysed reaction is L-tyrosyl-[protein] + ATP = O-(5'-adenylyl)-L-tyrosyl-[protein] + diphosphate. The enzyme catalyses L-histidyl-[protein] + UTP = N(tele)-(5'-uridylyl)-L-histidyl-[protein] + diphosphate. It carries out the reaction L-seryl-[protein] + UTP = O-(5'-uridylyl)-L-seryl-[protein] + diphosphate. It catalyses the reaction L-tyrosyl-[protein] + UTP = O-(5'-uridylyl)-L-tyrosyl-[protein] + diphosphate. Nucleotidyltransferase involved in the post-translational modification of proteins. It can catalyze the addition of adenosine monophosphate (AMP) or uridine monophosphate (UMP) to a protein, resulting in modifications known as AMPylation and UMPylation. The polypeptide is Protein nucleotidyltransferase YdiU (Xanthomonas campestris pv. campestris (strain 8004)).